A 492-amino-acid chain; its full sequence is N-succinylglutamate 5-semialdehyde dehydrogenase (492 aa).

220-225 lines the NAD(+) pocket; the sequence is GSASTG. Active-site residues include Glu-243 and Cys-277.

Belongs to the aldehyde dehydrogenase family. AstD subfamily.

It carries out the reaction N-succinyl-L-glutamate 5-semialdehyde + NAD(+) + H2O = N-succinyl-L-glutamate + NADH + 2 H(+). The protein operates within amino-acid degradation; L-arginine degradation via AST pathway; L-glutamate and succinate from L-arginine: step 4/5. Functionally, catalyzes the NAD-dependent reduction of succinylglutamate semialdehyde into succinylglutamate. The sequence is that of N-succinylglutamate 5-semialdehyde dehydrogenase from Salmonella typhi.